We begin with the raw amino-acid sequence, 533 residues long: Apolipoprotein N-acyltransferase (533 aa).

The next 6 membrane-spanning stretches (helical) occupy residues alanine 17 to phenylalanine 37, tryptophan 74 to isoleucine 94, leucine 105 to alanine 125, leucine 127 to glutamate 147, valine 178 to leucine 198, and valine 205 to alanine 225. Residues valine 245–glycine 495 enclose the CN hydrolase domain. Glutamate 290 acts as the Proton acceptor in catalysis. The active site involves lysine 354. The Nucleophile role is filled by cysteine 407. Residues tyrosine 509–isoleucine 529 form a helical membrane-spanning segment.

This sequence belongs to the CN hydrolase family. Apolipoprotein N-acyltransferase subfamily.

Its subcellular location is the cell inner membrane. It catalyses the reaction N-terminal S-1,2-diacyl-sn-glyceryl-L-cysteinyl-[lipoprotein] + a glycerophospholipid = N-acyl-S-1,2-diacyl-sn-glyceryl-L-cysteinyl-[lipoprotein] + a 2-acyl-sn-glycero-3-phospholipid + H(+). It participates in protein modification; lipoprotein biosynthesis (N-acyl transfer). Functionally, catalyzes the phospholipid dependent N-acylation of the N-terminal cysteine of apolipoprotein, the last step in lipoprotein maturation. The sequence is that of Apolipoprotein N-acyltransferase from Rhizobium rhizogenes (strain K84 / ATCC BAA-868) (Agrobacterium radiobacter).